Here is a 300-residue protein sequence, read N- to C-terminus: NAD kinase (300 aa).

The active-site Proton acceptor is aspartate 75. NAD(+)-binding positions include 75 to 76 (DG), 149 to 150 (ND), arginine 177, aspartate 179, 190 to 195 (TAYALS), alanine 214, and glutamine 248.

The protein belongs to the NAD kinase family. It depends on a divalent metal cation as a cofactor.

It is found in the cytoplasm. The enzyme catalyses NAD(+) + ATP = ADP + NADP(+) + H(+). Functionally, involved in the regulation of the intracellular balance of NAD and NADP, and is a key enzyme in the biosynthesis of NADP. Catalyzes specifically the phosphorylation on 2'-hydroxyl of the adenosine moiety of NAD to yield NADP. This Burkholderia multivorans (strain ATCC 17616 / 249) protein is NAD kinase.